Here is a 418-residue protein sequence, read N- to C-terminus: uncharacterized protein (418 aa).

The interval 1–24 is disordered; the sequence is MSGTAGFITVSPGPPTEAPGGFPR.

This sequence to A.pernix APE_1276 and S.solfataricus SSO2105.

This is an uncharacterized protein from Aeropyrum pernix (strain ATCC 700893 / DSM 11879 / JCM 9820 / NBRC 100138 / K1).